The following is a 62-amino-acid chain: UPF0434 protein SPO3421 (62 aa).

This sequence belongs to the UPF0434 family.

In Ruegeria pomeroyi (strain ATCC 700808 / DSM 15171 / DSS-3) (Silicibacter pomeroyi), this protein is UPF0434 protein SPO3421.